The sequence spans 285 residues: PHO85 cyclin-7 (285 aa).

Low complexity predominate over residues 1 to 14 (MELSSPSKKTTTSP). Residues 1 to 42 (MELSSPSKKTTTSPINIPGGNRDNLIIGPHSHSFKTDPFSSN) are disordered. At Ser69 the chain carries Phosphoserine.

The protein belongs to the cyclin family. PHO80 subfamily. As to quaternary structure, forms a cyclin-CDK complex with PHO85. Interacts with the substrate proteins MMR1 and YJL084C. Interacts with the CDK inhibitor (CKI) PHO81.

The protein resides in the cytoplasm. The PCL7-PHO85 cyclin-CDK is inhibited by PHO81 in low-phosphate conditions. In terms of biological role, cyclin partner of the cyclin-dependent kinase (CDK) PHO85. Together with cyclin PCL6, controls glycogen phosphorylase and glycogen synthase activities in response to nutrient availablility. The PCL7-PHO85 cyclin-CDK holoenzyme has GLC8 kinase activity and phosphorylates and inactivates the phosphatase PP1-2 inhibitor GLC8, causing activation of PP1-2, which then dephosphorylates and activates glycogen phosphorylase. PCL7-PHO85 also phosphorylates MMR1 and YJL084C. In Saccharomyces cerevisiae (strain ATCC 204508 / S288c) (Baker's yeast), this protein is PHO85 cyclin-7 (PCL7).